The chain runs to 319 residues: Melanoma-associated antigen B2 (319 aa).

Residues 1–17 (MPRGQKSKLRAREKRRK) show a composition bias toward basic residues. A disordered region spans residues 1–112 (MPRGQKSKLR…TKSPSEDPLT (112 aa)). Low complexity-rich tracts occupy residues 39–57 (PCCSSSVSGGAASSSPAAG), 67–79 (TTAAAAAAGVSST), and 94–105 (ASSSQASTSTKS). A phosphoserine mark is found at serine 77 and serine 105. An MAGE domain is found at 111-310 (LTRKSGSLVQ…CAFPTHYEEA (200 aa)).

As to quaternary structure, interacts with TRIM28. As to expression, expressed in testis and placenta, and in a significant fraction of tumors of various histologic types.

May enhance ubiquitin ligase activity of RING-type zinc finger-containing E3 ubiquitin-protein ligases. Proposed to act through recruitment and/or stabilization of the Ubl-conjugating enzyme (E2) at the E3:substrate complex. The sequence is that of Melanoma-associated antigen B2 (MAGEB2) from Homo sapiens (Human).